The sequence spans 80 residues: D-alanyl carrier protein 2 (80 aa).

One can recognise a Carrier domain in the interval 1-80 (MIMDDVKATV…KIVAKVASLQ (80 aa)). Position 38 is an O-(pantetheine 4'-phosphoryl)serine (serine 38).

The protein belongs to the DltC family. Post-translationally, 4'-phosphopantetheine is transferred from CoA to a specific serine of apo-DCP.

The protein resides in the cytoplasm. It participates in cell wall biogenesis; lipoteichoic acid biosynthesis. Functionally, carrier protein involved in the D-alanylation of lipoteichoic acid (LTA). The loading of thioester-linked D-alanine onto DltC is catalyzed by D-alanine--D-alanyl carrier protein ligase DltA. The DltC-carried D-alanyl group is further transferred to cell membrane phosphatidylglycerol (PG) by forming an ester bond, probably catalyzed by DltD. D-alanylation of LTA plays an important role in modulating the properties of the cell wall in Gram-positive bacteria, influencing the net charge of the cell wall. The chain is D-alanyl carrier protein 2 from Lactiplantibacillus plantarum (strain ATCC BAA-793 / NCIMB 8826 / WCFS1) (Lactobacillus plantarum).